A 167-amino-acid chain; its full sequence is Putative C-type lectin-like domain family 1 (167 aa).

Residues 1–67 lie on the Cytoplasmic side of the membrane; it reads MVSNFFHVIQ…KYDCPFSGTS (67 aa). A helical; Signal-anchor for type II membrane protein transmembrane segment spans residues 68–88; it reads FVVFSLFLICAMAGDVVYADI. Residues 89–167 are Extracellular-facing; sequence KTVRTSPLEL…DITAMVRFNI (79 aa). Residues N109, N140, and N149 are each glycosylated (N-linked (GlcNAc...) asparagine). The C-type lectin; atypical domain maps to 116 to 167; it reads SCPAKDWKVHKGKCYWIAETKKSWNKSQNDCAINNSYLMVIQDITAMVRFNI.

Expressed in spleen, lymph node, and tonsil. Lower expression in peripheral blood, bone marrow, and colon. No expression detected in thymus. Highly expressed in dendritic and B-cells.

Its subcellular location is the cell membrane. Its function is as follows. May function in mediating immune cell-cell interactions. May act as a T-cell costimulatory molecule, enhancing anti-CD3-induced proliferation. May play a role in the interaction of dendritic cells with T-cells and the cells of the adaptive immune response. This is Putative C-type lectin-like domain family 1 from Homo sapiens (Human).